A 740-amino-acid chain; its full sequence is Ion-translocating oxidoreductase complex subunit C (740 aa).

4Fe-4S ferredoxin-type domains are found at residues 369–397 (GEPQ…QQLY) and 407–436 (KATT…VQYF). [4Fe-4S] cluster-binding residues include Cys377, Cys380, Cys383, Cys387, Cys416, Cys419, Cys422, and Cys426. The disordered stretch occupies residues 602–718 (KLEQQQANAE…EEQVDPRKAA (117 aa)).

Belongs to the 4Fe4S bacterial-type ferredoxin family. RnfC subfamily. In terms of assembly, the complex is composed of six subunits: RsxA, RsxB, RsxC, RsxD, RsxE and RsxG. It depends on [4Fe-4S] cluster as a cofactor.

It localises to the cell inner membrane. Functionally, part of a membrane-bound complex that couples electron transfer with translocation of ions across the membrane. Required to maintain the reduced state of SoxR. The protein is Ion-translocating oxidoreductase complex subunit C of Shigella sonnei (strain Ss046).